The sequence spans 296 residues: Ribonuclease H2 subunit A (296 aa).

The RNase H type-2 domain occupies 14–236 (PCLMGIDEAG…CTTHLKGEVE (223 aa)). A divalent metal cation is bound by residues Asp20, Glu21, and Asp127.

Belongs to the RNase HII family. Eukaryotic subfamily. Mn(2+) is required as a cofactor. Requires Mg(2+) as cofactor.

It catalyses the reaction Endonucleolytic cleavage to 5'-phosphomonoester.. In terms of biological role, catalytic subunit of RNase HII, an endonuclease that specifically degrades the RNA of RNA:DNA hybrids. Participates in DNA replication, possibly by mediating the removal of lagging-strand Okazaki fragment RNA primers during DNA replication. Mediates the excision of single ribonucleotides from DNA:RNA duplexes. The polypeptide is Ribonuclease H2 subunit A (Arabidopsis thaliana (Mouse-ear cress)).